The chain runs to 505 residues: Probable cytochrome P450 28c1 (505 aa).

Cys-444 serves as a coordination point for heme.

The protein belongs to the cytochrome P450 family. It depends on heme as a cofactor.

The protein localises to the endoplasmic reticulum membrane. Its subcellular location is the microsome membrane. May be involved in the metabolism of insect hormones and in the breakdown of synthetic insecticides. This Drosophila melanogaster (Fruit fly) protein is Probable cytochrome P450 28c1 (Cyp28c1).